Consider the following 407-residue polypeptide: BRCA1-A complex subunit Abraxas 1 (407 aa).

The MPN domain occupies 7-155; sequence LGVLSGFVLG…THCLEHALYK (149 aa). Residue Ser48 is modified to Phosphoserine. A coiled-coil region spans residues 209–259; that stretch reads LKEVHKINEMYAAVQEELKSICQKVEQSEREVEKLLMDVNQLKEVRRTQQA. Residues 344–407 form a disordered region; it reads KRKALDTHDQ…DADYPRSPTF (64 aa). Positions 347–366 are enriched in basic and acidic residues; sequence ALDTHDQGSVKRPRLLETES. Ser384, Ser385, Ser394, and Ser404 each carry phosphoserine. A compositionally biased stretch (acidic residues) spans 388 to 399; sequence IDIEMGSPEDDA. The pSXXF motif motif lies at 404 to 407; it reads SPTF.

It belongs to the FAM175 family. Abraxas subfamily. Component of the ARISC complex, at least composed of UIMC1/RAP80, ABRAXAS1, BRCC3/BRCC36, BABAM2 and BABAM1/NBA1. Component of the BRCA1-A complex, at least composed of the BRCA1, BARD1, UIMC1/RAP80, ABRAXAS1, BRCC3/BRCC36, BABAM2 and BABAM1/NBA1. In the complex, interacts directly with UIMC1/RAP80, BRCC3/BRCC36 and BABAM2. Homodimer. Interacts directly (when phosphorylated at Ser-404) with BRCA1. The phosphorylated homodimer can interact directly with two BRCA1 chains, giving rise to a heterotetramer. Binds polyubiquitin. Post-translationally, phosphorylation of Ser-404 of the pSXXF motif by ATM or ATR constitutes a specific recognition motif for the BRCT domain of BRCA1.

The protein resides in the nucleus. Involved in DNA damage response and double-strand break (DSB) repair. Component of the BRCA1-A complex, acting as a central scaffold protein that assembles the various components of the complex and mediates the recruitment of BRCA1. The BRCA1-A complex specifically recognizes 'Lys-63'-linked ubiquitinated histones H2A and H2AX at DNA lesion sites, leading to target the BRCA1-BARD1 heterodimer to sites of DNA damage at DSBs. This complex also possesses deubiquitinase activity that specifically removes 'Lys-63'-linked ubiquitin on histones H2A and H2AX. The sequence is that of BRCA1-A complex subunit Abraxas 1 from Mus musculus (Mouse).